The sequence spans 274 residues: Diaminopimelate epimerase (274 aa).

Residues N11, Q44, and N64 each coordinate substrate. The Proton donor role is filled by C73. Substrate contacts are provided by residues 74-75 (GN), N157, N190, and 208-209 (ER). Residue C217 is the Proton acceptor of the active site. A substrate-binding site is contributed by 218-219 (GS).

The protein belongs to the diaminopimelate epimerase family. As to quaternary structure, homodimer.

Its subcellular location is the cytoplasm. It carries out the reaction (2S,6S)-2,6-diaminopimelate = meso-2,6-diaminopimelate. The protein operates within amino-acid biosynthesis; L-lysine biosynthesis via DAP pathway; DL-2,6-diaminopimelate from LL-2,6-diaminopimelate: step 1/1. Functionally, catalyzes the stereoinversion of LL-2,6-diaminopimelate (L,L-DAP) to meso-diaminopimelate (meso-DAP), a precursor of L-lysine and an essential component of the bacterial peptidoglycan. The sequence is that of Diaminopimelate epimerase from Actinobacillus succinogenes (strain ATCC 55618 / DSM 22257 / CCUG 43843 / 130Z).